Reading from the N-terminus, the 834-residue chain is Protein translocase subunit SecA (834 aa).

Residues Q85, 103 to 107 (GEGKT), and D491 contribute to the ATP site. The segment at 790-809 (RETSTNINDGEGGSHEPIKR) is disordered. Zn(2+)-binding residues include C820, C822, C831, and C832.

Belongs to the SecA family. In terms of assembly, monomer and homodimer. Part of the essential Sec protein translocation apparatus which comprises SecA, SecYEG and auxiliary proteins SecDF. Other proteins may also be involved. Zn(2+) is required as a cofactor.

The protein resides in the cell membrane. It localises to the cytoplasm. It catalyses the reaction ATP + H2O + cellular proteinSide 1 = ADP + phosphate + cellular proteinSide 2.. Its function is as follows. Part of the Sec protein translocase complex. Interacts with the SecYEG preprotein conducting channel. Has a central role in coupling the hydrolysis of ATP to the transfer of proteins into and across the cell membrane, serving as an ATP-driven molecular motor driving the stepwise translocation of polypeptide chains across the membrane. This Clostridium novyi (strain NT) protein is Protein translocase subunit SecA.